A 767-amino-acid chain; its full sequence is Slo-interacting protein 1 (767 aa).

The PDZ domain maps to 202 to 280 (QQSSTDTNKG…SVTLLVSRIL (79 aa)). 2 disordered regions span residues 521-557 (GNAA…NPDE) and 744-767 (KEER…QQQQ). Positions 532 to 555 (NSSSAYNTGDSNNSASPHQNTTNP) are enriched in polar residues. A compositionally biased stretch (basic and acidic residues) spans 744–755 (KEERKRHIERAR).

As to quaternary structure, interacts with Slo. In embryos, it is expressed throughout the CNS and in several peripheral locations. Colocalizes with Slo.

Functionally, may selectively reduce calcium-activated potassium channel (Slo) currents by reducing the number of Slo channels in the plasma membrane. The sequence is that of Slo-interacting protein 1 (Slip1) from Drosophila melanogaster (Fruit fly).